The following is a 339-amino-acid chain: Phosphate acyltransferase (339 aa).

It belongs to the PlsX family. As to quaternary structure, homodimer. Probably interacts with PlsY.

Its subcellular location is the cytoplasm. The catalysed reaction is a fatty acyl-[ACP] + phosphate = an acyl phosphate + holo-[ACP]. It functions in the pathway lipid metabolism; phospholipid metabolism. In terms of biological role, catalyzes the reversible formation of acyl-phosphate (acyl-PO(4)) from acyl-[acyl-carrier-protein] (acyl-ACP). This enzyme utilizes acyl-ACP as fatty acyl donor, but not acyl-CoA. The protein is Phosphate acyltransferase of Vesicomyosocius okutanii subsp. Calyptogena okutanii (strain HA).